We begin with the raw amino-acid sequence, 419 residues long: Protein transport protein sec9 (419 aa).

Basic residues predominate over residues 1 to 11; sequence MKKLFKKKKGV. 3 disordered regions span residues 1 to 60, 116 to 143, and 156 to 186; these read MKKL…TYGS, ARKDMPPMKSSAAVTERPSMHRSAPSQD, and ARIQNDDESTTDTIPHNDDGTEGDEYGEGYR. Positions 21–32 are enriched in polar residues; it reads ESNSNTATNAPS. Residues 36 to 60 are compositionally biased toward low complexity; that stretch reads GGTTANSYSSNSYNDNNNSNSTYGS. Serine 141 is modified (phosphoserine). T-SNARE coiled-coil homology domains follow at residues 203–265 and 356–418; these read QFVK…AREL and DAME…LRHI.

The protein belongs to the SNAP-25 family.

In terms of biological role, has a role in cell separation, a final step of cytokinesis and in the assembly of the forespore membrane. May have a role in the transport of secretory proteins to these growing sites. The chain is Protein transport protein sec9 (sec9) from Schizosaccharomyces pombe (strain 972 / ATCC 24843) (Fission yeast).